The sequence spans 323 residues: Olfactory receptor 2T35 (323 aa).

At 1 to 26 (MGMEGLLQNSTNFVLTGLITHPAFPG) the chain is on the extracellular side. A glycan (N-linked (GlcNAc...) asparagine) is linked at Asn9. A helical transmembrane segment spans residues 27-50 (LLFAVVFSIFVVAITANLVMILLI). Residues 51–58 (HMDSRLHT) lie on the Cytoplasmic side of the membrane. A helical transmembrane segment spans residues 59–80 (PMYFLLSQLSIMDTIYICITVP). Topologically, residues 81-101 (KMLQDLLSKDKTISFLGCAVQ) are extracellular. Cys98 and Cys189 are disulfide-bonded. A helical transmembrane segment spans residues 102–120 (IFYLTLIGGEFFLLGLMAY). Residues 121–139 (DRYVAVCNPLRYPLLMNRR) lie on the Cytoplasmic side of the membrane. A helical membrane pass occupies residues 140 to 158 (VCLFMVVGSWVGGSLDGFM). Residues 159–195 (LTPVTMSFPFCRSREINHFFCEIPAVLKLSCTDTSLY) lie on the Extracellular side of the membrane. Residues 196-219 (ETLMYACCVLMLLIPLSVISVSYT) form a helical membrane-spanning segment. Over 220–236 (HILLTVHRMNSAEGRRK) the chain is Cytoplasmic. Residues 237 to 259 (AFATCSSHIMVVSVFYGAAFYTN) form a helical membrane-spanning segment. Residues 260–272 (VLPHSYHTPEKDK) lie on the Extracellular side of the membrane. Residues 273–292 (VVSAFYTILTPMLNPLIYSL) traverse the membrane as a helical segment. Residues 293 to 323 (RNKDVAAALRKVLGRCGSSQSIRVATVIRKG) are Cytoplasmic-facing.

This sequence belongs to the G-protein coupled receptor 1 family.

It localises to the cell membrane. Functionally, odorant receptor. The protein is Olfactory receptor 2T35 (OR2T35) of Homo sapiens (Human).